The chain runs to 216 residues: Ribosomal RNA small subunit methyltransferase G (216 aa).

S-adenosyl-L-methionine contacts are provided by residues Gly-81, Leu-86, 132–133 (VE), and Arg-147.

The protein belongs to the methyltransferase superfamily. RNA methyltransferase RsmG family.

Its subcellular location is the cytoplasm. It catalyses the reaction guanosine(527) in 16S rRNA + S-adenosyl-L-methionine = N(7)-methylguanosine(527) in 16S rRNA + S-adenosyl-L-homocysteine. In terms of biological role, specifically methylates the N7 position of guanine in position 527 of 16S rRNA. The polypeptide is Ribosomal RNA small subunit methyltransferase G (Hydrogenovibrio crunogenus (strain DSM 25203 / XCL-2) (Thiomicrospira crunogena)).